The sequence spans 326 residues: Nucleoporin Nup37 (326 aa).

7 WD repeats span residues S6–E54, I61–S109, N115–L154, T159–L195, Q199–I237, Y242–I282, and H287–T324.

Component of the Nup107-160 subcomplex of the nuclear pore complex (NPC). The Nup107-160 subcomplex includes NUP160, NUP133, NUP107, NUP98, NUP85, NUP43, NUP37, SEH1 and SEC13.

The protein localises to the chromosome. The protein resides in the centromere. It is found in the kinetochore. It localises to the nucleus. Its subcellular location is the nuclear pore complex. Its function is as follows. Component of the Nup107-160 subcomplex of the nuclear pore complex (NPC). The Nup107-160 subcomplex is required for the assembly of a functional NPC. The Nup107-160 subcomplex is also required for normal kinetochore microtubule attachment, mitotic progression and chromosome segregation. The protein is Nucleoporin Nup37 (NUP37) of Homo sapiens (Human).